The primary structure comprises 200 residues: uncharacterized protein (200 aa).

3 disordered regions span residues 1–27 (MTDTRREQEKDERRKLQEQSRQNEAET), 42–79 (IPKEAKGNEPLLENYKSGLQETRKELETTPDATKSTNA), and 169–200 (HGRAGIVRNPQAAQHQRQRQMEKTGAGREHGR). Residues 187-200 (RQMEKTGAGREHGR) are compositionally biased toward basic and acidic residues.

This is an uncharacterized protein from Shigella flexneri.